Here is a 447-residue protein sequence, read N- to C-terminus: Retinoic acid receptor alpha (447 aa).

The modulating stretch occupies residues 1–79; it reads MAGKGNPVPG…PPPPPRVYKP (79 aa). The span at 47–61 shows a compositional bias: polar residues; it reads TPSPATIETQSTSSE. The disordered stretch occupies residues 47–72; the sequence is TPSPATIETQSTSSEEIVPSPPSPPP. 2 consecutive NR C4-type zinc fingers follow at residues 80 to 100 and 116 to 140; these read CFVC…CEGC and CHRE…LQKC. The nuclear receptor DNA-binding region spans 80 to 145; that stretch reads CFVCQDKSSG…RLQKCLEVGM (66 aa). The segment at 146 to 174 is hinge; the sequence is SKESVRNDRNKKKKDEKKPECIENYVLSP. An NR LBD domain is found at 175–409; that stretch reads DTEQMINRVR…PLIQEMLENS (235 aa). Positions 400-408 match the 9aaTAD motif; that stretch reads PLIQEMLEN. The tract at residues 407-447 is disordered; sequence ENSEGLESGATGSRPSGAPPGSCSPSLSPSSAQSSPPTQSP. The span at 414-447 shows a compositional bias: low complexity; the sequence is SGATGSRPSGAPPGSCSPSLSPSSAQSSPPTQSP.

It belongs to the nuclear hormone receptor family. NR1 subfamily. As to quaternary structure, heterodimer; with an rxr molecule. Binds DNA preferentially as a rar/rxr heterodimer.

The protein resides in the nucleus. Its function is as follows. Receptor for retinoic acid. Retinoic acid receptors bind as heterodimers to their target response elements in response to their ligands, all-trans or 9-cis retinoic acid, and regulate gene expression in various biological processes. The rar/rxr heterodimers bind to the retinoic acid response elements (RARE) composed of tandem 5'-AGGTCA-3' sites known as DR1-DR5. This Takifugu rubripes (Japanese pufferfish) protein is Retinoic acid receptor alpha (rara).